A 64-amino-acid chain; its full sequence is Large ribosomal subunit protein bL28 (64 aa).

Belongs to the bacterial ribosomal protein bL28 family.

The sequence is that of Large ribosomal subunit protein bL28 from Campylobacter lari (strain RM2100 / D67 / ATCC BAA-1060).